A 408-amino-acid chain; its full sequence is MYSYPNEQGRFGDFGGKFVPETLMQPLEEIEKAFLELKDDPSFQKDYQKLLNDYSGRPTALTFADQLTKQLGGAKIYLKREDLNHTGAHKINNALGQALLAKKMGKTKLIAETGAGQHGVAAATVAAKFGLSCIVFMGEEDVARQSLNVFRMKLLGAEVVPVSSGNGTLKDATNEAIRYWVQHCQDHFYMIGSVVGPHPYPYIVREFQRMIGEEAKAQFYQLEQSLPDKVVACVGGGSNAIGMFSAFIEETVELIGVEAAGKGVDTPLHAATITKGTKGVIHGSLTYLIQDEYGQIIEPYSISAGLDYPGVGPEHAHLHQTGRVTYESVTDDEAVSALRLLTETEGILPAIESAHALAKAFEIAKELPREKSVLVCLSGRGDKDVHTLMKVLEEEVNQDVQSEKTAVR.

Lys-90 is subject to N6-(pyridoxal phosphate)lysine.

It belongs to the TrpB family. In terms of assembly, tetramer of two alpha and two beta chains. Pyridoxal 5'-phosphate serves as cofactor.

The catalysed reaction is (1S,2R)-1-C-(indol-3-yl)glycerol 3-phosphate + L-serine = D-glyceraldehyde 3-phosphate + L-tryptophan + H2O. It functions in the pathway amino-acid biosynthesis; L-tryptophan biosynthesis; L-tryptophan from chorismate: step 5/5. In terms of biological role, the beta subunit is responsible for the synthesis of L-tryptophan from indole and L-serine. The polypeptide is Tryptophan synthase beta chain (Bacillus licheniformis (strain ATCC 14580 / DSM 13 / JCM 2505 / CCUG 7422 / NBRC 12200 / NCIMB 9375 / NCTC 10341 / NRRL NRS-1264 / Gibson 46)).